We begin with the raw amino-acid sequence, 572 residues long: BOS complex subunit ncln (572 aa).

A signal peptide spans 1 to 35 (MFEEAGEVLENMLKVSFPLSLVLFLVLVCPLRAEA). The Extracellular portion of the chain corresponds to 36–530 (AHEFSVYRMQ…TMNAYRVKPA (495 aa)). Residues asparagine 108, asparagine 234, and asparagine 436 are each glycosylated (N-linked (GlcNAc...) asparagine). Residues 531 to 551 (IFDLLLAVCIASYLGVLYLAI) form a helical membrane-spanning segment. At 552 to 572 (QNFGLLYGFLRRVTAPRVKQH) the chain is on the cytoplasmic side.

This sequence belongs to the nicastrin family. As to quaternary structure, component of the multi-pass translocon (MPT) complex.

The protein resides in the endoplasmic reticulum membrane. Component of the multi-pass translocon (MPT) complex that mediates insertion of multi-pass membrane proteins into the lipid bilayer of membranes. The MPT complex takes over after the SEC61 complex: following membrane insertion of the first few transmembrane segments of proteins by the SEC61 complex, the MPT complex occludes the lateral gate of the SEC61 complex to promote insertion of subsequent transmembrane regions. Antagonizes Nodal signaling and subsequent organization of axial structures during mesodermal patterning. Ectopic expression results in cyclopia, due to a defect in mesendoderm patterning. This is BOS complex subunit ncln (ncln) from Danio rerio (Zebrafish).